The following is a 934-amino-acid chain: Glycine dehydrogenase (decarboxylating) (934 aa).

At K687 the chain carries N6-(pyridoxal phosphate)lysine.

It belongs to the GcvP family. In terms of assembly, the glycine cleavage system is composed of four proteins: P, T, L and H. It depends on pyridoxal 5'-phosphate as a cofactor.

The catalysed reaction is N(6)-[(R)-lipoyl]-L-lysyl-[glycine-cleavage complex H protein] + glycine + H(+) = N(6)-[(R)-S(8)-aminomethyldihydrolipoyl]-L-lysyl-[glycine-cleavage complex H protein] + CO2. In terms of biological role, the glycine cleavage system catalyzes the degradation of glycine. The P protein binds the alpha-amino group of glycine through its pyridoxal phosphate cofactor; CO(2) is released and the remaining methylamine moiety is then transferred to the lipoamide cofactor of the H protein. This Nocardia farcinica (strain IFM 10152) protein is Glycine dehydrogenase (decarboxylating).